The following is a 460-amino-acid chain: V-type ATP synthase beta chain (460 aa).

Belongs to the ATPase alpha/beta chains family.

Produces ATP from ADP in the presence of a proton gradient across the membrane. The V-type beta chain is a regulatory subunit. The protein is V-type ATP synthase beta chain of Thermotoga neapolitana (strain ATCC 49049 / DSM 4359 / NBRC 107923 / NS-E).